The sequence spans 190 residues: Probable nicotinate-nucleotide adenylyltransferase (190 aa).

It belongs to the NadD family.

The catalysed reaction is nicotinate beta-D-ribonucleotide + ATP + H(+) = deamido-NAD(+) + diphosphate. It functions in the pathway cofactor biosynthesis; NAD(+) biosynthesis; deamido-NAD(+) from nicotinate D-ribonucleotide: step 1/1. Functionally, catalyzes the reversible adenylation of nicotinate mononucleotide (NaMN) to nicotinic acid adenine dinucleotide (NaAD). This Borrelia turicatae (strain 91E135) protein is Probable nicotinate-nucleotide adenylyltransferase.